Consider the following 282-residue polypeptide: UDP-3-O-acyl-N-acetylglucosamine deacetylase (282 aa).

Zn(2+)-binding residues include His-81, His-239, and Asp-243. His-266 acts as the Proton donor in catalysis.

Belongs to the LpxC family. Zn(2+) serves as cofactor.

It catalyses the reaction a UDP-3-O-[(3R)-3-hydroxyacyl]-N-acetyl-alpha-D-glucosamine + H2O = a UDP-3-O-[(3R)-3-hydroxyacyl]-alpha-D-glucosamine + acetate. The protein operates within glycolipid biosynthesis; lipid IV(A) biosynthesis; lipid IV(A) from (3R)-3-hydroxytetradecanoyl-[acyl-carrier-protein] and UDP-N-acetyl-alpha-D-glucosamine: step 2/6. Functionally, catalyzes the hydrolysis of UDP-3-O-myristoyl-N-acetylglucosamine to form UDP-3-O-myristoylglucosamine and acetate, the committed step in lipid A biosynthesis. The polypeptide is UDP-3-O-acyl-N-acetylglucosamine deacetylase (Chlamydia pneumoniae (Chlamydophila pneumoniae)).